A 283-amino-acid chain; its full sequence is Tetraspanin-33 (283 aa).

Residues 1–24 are Cytoplasmic-facing; the sequence is MARRPRAPAASGEEFSFVSPLVKY. A helical transmembrane segment spans residues 25 to 45; that stretch reads LLFFFNMLFWVISMVMVAVGV. Residues 46 to 64 are Extracellular-facing; sequence YARLMKHAEAALACLAVDP. The chain crosses the membrane as a helical span at residues 65–85; sequence AILLIVVGVLMFLLTFCGCIG. Residues 86 to 96 are Cytoplasmic-facing; sequence SLRENICLLQT. Residues 97–117 traverse the membrane as a helical segment; the sequence is FSLCLTAVFLLQLAAGILGFV. Topologically, residues 118-235 are extracellular; the sequence is FSDKARGKVS…DKLVNWIHSN (118 aa). 4 disulfide bridges follow: Cys-156–Cys-224, Cys-157–Cys-189, Cys-173–Cys-183, and Cys-190–Cys-203. Asn-172 is a glycosylation site (N-linked (GlcNAc...) asparagine). The helical transmembrane segment at 236–256 threads the bilayer; sequence LFLLGGVALGLAIPQLVGILL. The Cytoplasmic portion of the chain corresponds to 257–283; it reads SQILVNQIKDQIKLQLYNQQHRADPWY.

The protein belongs to the tetraspanin (TM4SF) family. As to quaternary structure, homodimer; disulfide-linked. Interacts (via extracellular domain) with ADAM10 (via extracellular domain). Interacts (via cytoplasmic domain) with PLEKHA7 (via WW domains); the interaction is dependent on PDZD11 being bound to PLEKHA7 and facilitates the docking of ADAM10 to zonula adherens. As to expression, predominantly expressed in erythroblasts.

It localises to the cell membrane. The protein localises to the cell junction. The protein resides in the adherens junction. Its subcellular location is the cytoplasm. Functionally, part of TspanC8 subgroup, composed of 6 members that interact with the transmembrane metalloprotease ADAM10. This interaction is required for ADAM10 exit from the endoplasmic reticulum and for enzymatic maturation and trafficking to the cell surface as well as substrate specificity. Different TspanC8/ADAM10 complexes have distinct substrates. Plays an important role in normal erythropoiesis. It has a role in the differentiation of erythroid progenitors. Negatively regulates ligand-induced Notch activity probably by regulating ADAM10 activity. Mediates docking of ADAM10 to zonula adherens by interacting with ADAM10 and, in a PDZD11-dependent manner, with the zonula adherens protein PLEKHA7. This chain is Tetraspanin-33, found in Homo sapiens (Human).